Consider the following 383-residue polypeptide: Probable butyrate kinase (383 aa).

The protein belongs to the acetokinase family.

It is found in the cytoplasm. It catalyses the reaction butanoate + ATP = butanoyl phosphate + ADP. This chain is Probable butyrate kinase, found in Deinococcus radiodurans (strain ATCC 13939 / DSM 20539 / JCM 16871 / CCUG 27074 / LMG 4051 / NBRC 15346 / NCIMB 9279 / VKM B-1422 / R1).